Reading from the N-terminus, the 132-residue chain is MSRLIFFILVTAIYFVGNEACKEIEIVIKNTLGPSRILQYHCRSGNTNVGVQYLNFKGTRIIKFKDDGTERSRWNCLFRQGINMKFFTEVEAYRPDLKHPLCGKRYELSARMDAIYFKMDERPPQPLNKWRS.

The first 20 residues, 1–20, serve as a signal peptide directing secretion; that stretch reads MSRLIFFILVTAIYFVGNEA.

Belongs to the plant self-incompatibility (S1) protein family.

The protein localises to the secreted. The protein is S-protein homolog 15 of Arabidopsis thaliana (Mouse-ear cress).